Here is a 119-residue protein sequence, read N- to C-terminus: 5-hydroxyisourate hydrolase (119 aa).

Histidine 8, arginine 47, and tyrosine 116 together coordinate substrate.

It belongs to the transthyretin family. 5-hydroxyisourate hydrolase subfamily. As to quaternary structure, homotetramer.

The catalysed reaction is 5-hydroxyisourate + H2O = 5-hydroxy-2-oxo-4-ureido-2,5-dihydro-1H-imidazole-5-carboxylate + H(+). It functions in the pathway purine metabolism; urate degradation; (S)-allantoin from urate: step 2/3. Catalyzes the hydrolysis of 5-hydroxyisourate (HIU) to 2-oxo-4-hydroxy-4-carboxy-5-ureidoimidazoline (OHCU). This chain is 5-hydroxyisourate hydrolase, found in Halalkalibacterium halodurans (strain ATCC BAA-125 / DSM 18197 / FERM 7344 / JCM 9153 / C-125) (Bacillus halodurans).